The primary structure comprises 443 residues: Acid phosphatase type 7 (443 aa).

The signal sequence occupies residues 1-23; that stretch reads MAAAPPPPPPLLLLLLCVCAVFA. N-linked (GlcNAc...) asparagine glycans are attached at residues N53, N76, and N126. The Fe cation site is built by D140, D169, and Y172. Residue D169 participates in Zn(2+) binding. N204 is a binding site for Zn(2+). An N-linked (GlcNAc...) asparagine glycan is attached at N210. Residue H288 participates in Zn(2+) binding. A glycan (N-linked (GlcNAc...) asparagine) is linked at N313. H338 serves as a coordination point for Zn(2+). H340 serves as a coordination point for Fe cation. Residues N355 and N409 are each glycosylated (N-linked (GlcNAc...) asparagine).

This sequence belongs to the metallophosphoesterase superfamily. Purple acid phosphatase family. The cofactor is Fe cation. It depends on Zn(2+) as a cofactor.

Its subcellular location is the secreted. It catalyses the reaction a phosphate monoester + H2O = an alcohol + phosphate. This chain is Acid phosphatase type 7, found in Danio rerio (Zebrafish).